A 746-amino-acid chain; its full sequence is Stromal interaction molecule 2 (746 aa).

The first 14 residues, 1–14, serve as a signal peptide directing secretion; the sequence is MLVLGLLVAGAADG. At 15–218 the chain is on the extracellular side; the sequence is CELVPRHLRG…RPPHNWMKDF (204 aa). An EF-hand domain is found at 67 to 102; sequence FSLEALQTIHKQMDDDKDGGIEVEESDEFIREDMKY. Ca(2+) contacts are provided by Asp-80, Asp-82, Asp-84, and Glu-91. Residue Asn-135 is glycosylated (N-linked (GlcNAc...) asparagine). Positions 136–204 constitute an SAM domain; sequence WTLEDTLQWL…QLKALDVVLF (69 aa). A helical transmembrane segment spans residues 219 to 235; that stretch reads ILTVSIVIGVGGCWFAY. Residues 236 to 746 are Cytoplasmic-facing; that stretch reads TQNKTSKEHV…IKSLFKKKSK (511 aa). A coiled-coil region spans residues 247–394; it reads KMMKDLESLQ…EKIKKKRSTV (148 aa). Residues 483 to 562 form a disordered region; sequence DLDEDTPPIV…SLPSPDPDIL (80 aa). Residue Ser-523 is modified to Phosphoserine. A compositionally biased stretch (basic residues) spans 537–549; the sequence is HPSHPRHPHHPQH. A phosphoserine mark is found at Ser-609, Ser-621, Ser-640, Ser-650, Ser-661, Ser-665, Ser-680, and Ser-697. Residues 685-746 are disordered; it reads SSGIPVPKPR…IKSLFKKKSK (62 aa). Positions 723 to 732 are enriched in basic and acidic residues; it reads DLCHNGEKSK. The segment covering 733–746 has biased composition (basic residues); it reads KPSKIKSLFKKKSK.

As to quaternary structure, oligomer with STIM1. Interacts with ORAI1. Glycosylated. In terms of processing, phosphorylated predominantly on Ser residues. Expressed in all tissues and tumor cell lines examined.

The protein localises to the endoplasmic reticulum membrane. Its function is as follows. Plays a role in mediating store-operated Ca(2+) entry (SOCE), a Ca(2+) influx following depletion of intracellular Ca(2+) stores. Functions as a highly sensitive Ca(2+) sensor in the endoplasmic reticulum which activates both store-operated and store-independent Ca(2+)-influx. Regulates basal cytosolic and endoplasmic reticulum Ca(2+) concentrations. Upon mild variations of the endoplasmic reticulum Ca(2+) concentration, translocates from the endoplasmic reticulum to the plasma membrane where it probably activates the Ca(2+) release-activated Ca(2+) (CRAC) channels ORAI1, ORAI2 and ORAI3. May inhibit STIM1-mediated Ca(2+) influx. The chain is Stromal interaction molecule 2 (STIM2) from Homo sapiens (Human).